Consider the following 229-residue polypeptide: Potassium/proton antiporter CemA (229 aa).

A run of 3 helical transmembrane segments spans residues 7–27, 106–126, and 189–209; these read FSPIFHLSFIVFLPWGIYLSF, MILRLSTNLICVVIISGFYIW, and IISGLVSTFPVILDTIFKYWI.

Belongs to the CemA family.

It is found in the plastid membrane. The catalysed reaction is K(+)(in) + H(+)(out) = K(+)(out) + H(+)(in). May be involved in proton extrusion. This chain is Potassium/proton antiporter CemA, found in Cuscuta reflexa (Southern Asian dodder).